Here is a 353-residue protein sequence, read N- to C-terminus: Cruciform cutting endonuclease 1, mitochondrial (353 aa).

Mg(2+)-binding residues include aspartate 293 and aspartate 294.

Homodimer. It depends on Mg(2+) as a cofactor.

It localises to the mitochondrion. It catalyses the reaction Endonucleolytic cleavage at a junction such as a reciprocal single-stranded crossover between two homologous DNA duplexes (Holliday junction).. Functionally, capable of resolving Holliday junctions. Specific for 4-way junctions. Seems to be important for the maintenance of mitochondrial DNA. Cleaves fixed junctions at the point of strand exchange. Cleaves after 5'-CT-3' sequence. The sequence is that of Cruciform cutting endonuclease 1, mitochondrial (CCE1) from Saccharomyces cerevisiae (strain ATCC 204508 / S288c) (Baker's yeast).